The following is a 74-amino-acid chain: UPF0435 protein BcerKBAB4_0386 (74 aa).

The protein belongs to the UPF0435 family.

The chain is UPF0435 protein BcerKBAB4_0386 from Bacillus mycoides (strain KBAB4) (Bacillus weihenstephanensis).